The following is a 111-amino-acid chain: Phosphoribosyl-AMP cyclohydrolase (111 aa).

Residue D80 coordinates Mg(2+). C81 contacts Zn(2+). Residues D82 and D84 each contribute to the Mg(2+) site. Positions 97 and 104 each coordinate Zn(2+).

It belongs to the PRA-CH family. In terms of assembly, homodimer. Mg(2+) is required as a cofactor. Zn(2+) serves as cofactor.

Its subcellular location is the cytoplasm. The enzyme catalyses 1-(5-phospho-beta-D-ribosyl)-5'-AMP + H2O = 1-(5-phospho-beta-D-ribosyl)-5-[(5-phospho-beta-D-ribosylamino)methylideneamino]imidazole-4-carboxamide. It functions in the pathway amino-acid biosynthesis; L-histidine biosynthesis; L-histidine from 5-phospho-alpha-D-ribose 1-diphosphate: step 3/9. In terms of biological role, catalyzes the hydrolysis of the adenine ring of phosphoribosyl-AMP. The sequence is that of Phosphoribosyl-AMP cyclohydrolase from Mycobacterium ulcerans (strain Agy99).